The chain runs to 538 residues: Chaperonin GroEL 1 (538 aa).

Residues 29–32, 86–90, G413, and D494 each bind ATP; these read TLGP and DGTTT.

The protein belongs to the chaperonin (HSP60) family. In terms of assembly, forms a cylinder of 14 subunits composed of two heptameric rings stacked back-to-back. Interacts with the co-chaperonin GroES.

It localises to the cytoplasm. The enzyme catalyses ATP + H2O + a folded polypeptide = ADP + phosphate + an unfolded polypeptide.. Functionally, together with its co-chaperonin GroES, plays an essential role in assisting protein folding. The GroEL-GroES system forms a nano-cage that allows encapsulation of the non-native substrate proteins and provides a physical environment optimized to promote and accelerate protein folding. The sequence is that of Chaperonin GroEL 1 from Mycobacterium avium (strain 104).